A 428-amino-acid chain; its full sequence is Adenylosuccinate synthetase (428 aa).

GTP-binding positions include 12–18 and 40–42; these read GDEGKGK and GHT. D13 (proton acceptor) is an active-site residue. 2 residues coordinate Mg(2+): D13 and G40. IMP-binding positions include 13 to 16, 38 to 41, T133, R147, N224, T239, and R303; these read DEGK and NAGH. The active-site Proton donor is H41. 299 to 305 serves as a coordination point for substrate; it reads TTTGRRR. GTP contacts are provided by residues R305, 331-333, and 413-415; these read KLD and GVG.

It belongs to the adenylosuccinate synthetase family. In terms of assembly, homodimer. Mg(2+) is required as a cofactor.

It is found in the cytoplasm. It carries out the reaction IMP + L-aspartate + GTP = N(6)-(1,2-dicarboxyethyl)-AMP + GDP + phosphate + 2 H(+). It participates in purine metabolism; AMP biosynthesis via de novo pathway; AMP from IMP: step 1/2. Functionally, plays an important role in the de novo pathway and in the salvage pathway of purine nucleotide biosynthesis. Catalyzes the first committed step in the biosynthesis of AMP from IMP. This chain is Adenylosuccinate synthetase, found in Coprinopsis cinerea (strain Okayama-7 / 130 / ATCC MYA-4618 / FGSC 9003) (Inky cap fungus).